Reading from the N-terminus, the 378-residue chain is MLKKLKDYRRIVVKIGSALLVDRATGLKREWLESLGQDIAALQHAGVEVLVVSSGAIALGRTVLGLPKKALKLEESQAAAAAGQIALAKAYADVLGGHGIKSGQILVTLSDTEERRRYLNARATIETLLKLKAVPIINENDTVATTEIRYGDNDRLAARVATMMGADLLILLSDIDGLYTAPPHKNPDAQFLPFVETITPQIEAMAGAAASELSRGGMKTKLDAGKIANAAGTAMIITSGTRFGPLSAIDRGERATLFEAAHAPVNAWKTWISGNLEPAGRLTVDAGAVKALKSGKSLLPAGVKEVDGDFERGDTVAVMNEDGREIARGLIAYDAADARKVAGHKSDEISAILGYDARAAMIHRNDLVVRAASDAKAA.

Position 14 (Lys-14) interacts with ATP. Ser-54, Asp-141, and Asn-153 together coordinate substrate. 173–174 (SD) is a binding site for ATP. The PUA domain maps to 279–356 (AGRLTVDAGA…DEISAILGYD (78 aa)).

It belongs to the glutamate 5-kinase family.

It is found in the cytoplasm. It carries out the reaction L-glutamate + ATP = L-glutamyl 5-phosphate + ADP. Its pathway is amino-acid biosynthesis; L-proline biosynthesis; L-glutamate 5-semialdehyde from L-glutamate: step 1/2. Its function is as follows. Catalyzes the transfer of a phosphate group to glutamate to form L-glutamate 5-phosphate. In Brucella canis (strain ATCC 23365 / NCTC 10854 / RM-666), this protein is Glutamate 5-kinase.